The following is a 330-amino-acid chain: tRNA U34 carboxymethyltransferase (330 aa).

Carboxy-S-adenosyl-L-methionine-binding positions include Lys-98, Trp-112, Lys-117, Gly-137, 187–188 (ME), Met-203, Tyr-207, and Arg-322. The tract at residues 309–330 (NPSKTIEGYPGPKRATLIAEKP) is disordered.

It belongs to the class I-like SAM-binding methyltransferase superfamily. CmoB family. As to quaternary structure, homotetramer.

The catalysed reaction is carboxy-S-adenosyl-L-methionine + 5-hydroxyuridine(34) in tRNA = 5-carboxymethoxyuridine(34) in tRNA + S-adenosyl-L-homocysteine + H(+). Catalyzes carboxymethyl transfer from carboxy-S-adenosyl-L-methionine (Cx-SAM) to 5-hydroxyuridine (ho5U) to form 5-carboxymethoxyuridine (cmo5U) at position 34 in tRNAs. The polypeptide is tRNA U34 carboxymethyltransferase (Marinobacter nauticus (strain ATCC 700491 / DSM 11845 / VT8) (Marinobacter aquaeolei)).